We begin with the raw amino-acid sequence, 660 residues long: Polycomb protein SCMH1 (660 aa).

2 MBT repeats span residues F28–P126 and S134–P235. A disordered region spans residues Q233–D345. 2 stretches are compositionally biased toward basic residues: residues R273–T284 and F305–R320. The span at P330–P343 shows a compositional bias: low complexity. An SAM domain is found at W593 to G658.

The protein belongs to the SCM family. Interacts with the SAM domain of PHC1 via its SAM domain in vitro. Associates with a PRC1-like complex. As to expression, strongly expressed in heart, muscle and pancreas. Weakly expressed in brain, placenta, lung, liver and kidney.

It localises to the nucleus. Functionally, associates with Polycomb group (PcG) multiprotein complexes; the complex class is required to maintain the transcriptionally repressive state of some genes. The chain is Polycomb protein SCMH1 from Homo sapiens (Human).